Here is a 1076-residue protein sequence, read N- to C-terminus: Enhancer of mRNA-decapping protein 4-like protein pdc1 (1076 aa).

2 stretches are compositionally biased toward low complexity: residues 1-19 (MNEQ…LPNL) and 53-69 (SSLL…SNQS). Disordered stretches follow at residues 1–82 (MNEQ…ASHS), 95–127 (GAKP…FNPV), and 139–204 (STGP…AEEQ). The segment covering 70-82 (PSNSGPKYYASHS) has biased composition (polar residues). The segment covering 153 to 173 (NDSQDTAFQSSRNMPSDTSVA) has biased composition (polar residues). Residues 174–184 (SPDYSHSQSSS) are compositionally biased toward low complexity. Polar residues predominate over residues 185-195 (PIANYQESGNS). WD repeat units lie at residues 292-334 (NSPN…STSE) and 402-441 (DTGI…PSTP). Disordered stretches follow at residues 666-714 (RHST…SPSS) and 892-934 (TAPD…PAQG). Residues 669–688 (TASPSTVNSGFSTPRSQATG) show a composition bias toward polar residues. Residues Ser671 and Ser673 each carry the phosphoserine modification. Thr674 carries the phosphothreonine modification. A compositionally biased stretch (basic and acidic residues) spans 695-706 (DKGERFETKDKS). An interaction with dcp2 region spans residues 789 to 1076 (MQVALKEEIA…ISEISVASSN (288 aa)). At Ser1075 the chain carries Phosphoserine.

Belongs to the WD repeat EDC4 family. As to quaternary structure, interacts with dcp2; via C-terminus.

The protein resides in the cytoplasm. The protein localises to the P-body. Involved in P-body formation. Acts as a functional homolog of human EDC4, which plays a role in mRNA decapping in the process of mRNA degradation. Enhances the decapping activity of dcp2. Together with edc3, acts as a scaffolding protein sufficient for the phase transition of the components of the 5' to 3' mRNA degradation machinery to form P-bodies. Intermolecular interactions between the edc3 Sm domain and at least 10 helical leucine-rich motifs in dcp2 and pdc1 build the core of the interaction network of this spontaneous clustering process. In Schizosaccharomyces pombe (strain 972 / ATCC 24843) (Fission yeast), this protein is Enhancer of mRNA-decapping protein 4-like protein pdc1.